A 231-amino-acid chain; its full sequence is Large ribosomal subunit protein uL1 (231 aa).

It belongs to the universal ribosomal protein uL1 family. In terms of assembly, part of the 50S ribosomal subunit.

Functionally, binds directly to 23S rRNA. The L1 stalk is quite mobile in the ribosome, and is involved in E site tRNA release. Its function is as follows. Protein L1 is also a translational repressor protein, it controls the translation of the L11 operon by binding to its mRNA. The polypeptide is Large ribosomal subunit protein uL1 (Paracidovorax citrulli (strain AAC00-1) (Acidovorax citrulli)).